The following is a 1200-amino-acid chain: MASGLIDTNFSSTLANGMSGCDQSTVESLADDPTDSPFDADDCLKVRKYWCFLLSSIFTFLAGLLVVLLWRAFAFVCCRKEPDLGPNDPKQKEQKASRNKQEFEGTFMTEAKDWAGELISGQTTTGRILVVLVFILSIASLIIYFVDASSEEVERCQKWSNNITQQIDLAFNIFFMVYFFIRFIAASDKLWFMLEMYSFVDYFTIPPSFVSIYLDRTWIGLRFLRALRLMTVPDILQYLNVLKTSSSIRLAQLVSIFISVWLTAAGIIHLLENSGDPLDFNNAHRLSYWTCVYFLIVTMSTVGYGDVYCETVLGRTFLVFFLLVGLAMFASSIPEIIELVGSGNKYGGELKREHGKRHIVVCGHITYESVSHFLKDFLHEDREDVDVEVVFLHRKPPDLELEGLFKRHFTTVEFFQGTIMNPIDLQRVKVHEADACLVLANKYCQDPDAEDAANIMRVISIKNYSDDIRVIIQLMQYHNKAYLLNIPSWDWKQGDDVICLAELKLGFIAQSCLAPGFSTMMANLFAMRSFKTSPDMQSWTNDYLRGTGMEMYTETLSPTFIGIPFAQATELCFSKLKLLLLAIEIKGAEEGADSKISINPRGAKIQANTQGFFIAQSADEVKRAWFYCKACHEDIKDETLIKKCKCKNLTVQPRSKFDDLDEHHPAPTFTPPELPKRVHVRGSVSGDITRDREDTNLLNRNVRRPNGTGNGTGGMHHMNNTAAAAAAAAAAGKQVNKVKPTVNVSRQVEGQVISPSQYNRPTSRSSGTGTQNQNGGVSLPAGIADDQSKDFDFEKTEMKYDSTGMFHWSPAKSLEDCILDRNQAAMTVLNGHVVVCLFADPDSPLIGLRNLVMPLRASNFHYHELKHVVIVGSVDYIRREWKMLQNLPKISVLNGSPLSRADLRAVNVNLCDMCCILSAKVPSNDDPTLADKEAILASLNIKAMTFDDTIGVLSQRGPEFDNLSATAGSPIVLQRRGSVYGANVPMITELVNDSNVQFLDQDDDDDPDTELYLTQPFACGTAFAVSVLDSLMSTTYFNQNALTLIRSLITGGATPELELILAEGAGLRGGYSTVESLSNRDRCRVGQISLYDGPLAQFGECGKYGDLFVAALKSYGMLCIGLYRFRDTSSSCDASSKRYVITNPPDDFSLLPTDQVFVLMQFDPGLEYKPPAVRAPAGGRGTNTQGSGVGGGGSNKDDNS.

The Extracellular segment spans residues M1 to K48. Residues Y49–L69 traverse the membrane as a helical segment. The Cytoplasmic portion of the chain corresponds to W70–R127. The helical transmembrane segment at I128–S149 threads the bilayer. Residues S150 to T164 are Extracellular-facing. A helical membrane pass occupies residues Q165–A185. Topologically, residues A186–K189 are cytoplasmic. A helical transmembrane segment spans residues L190–V210. The Extracellular portion of the chain corresponds to S211–L214. A helical; Voltage-sensor transmembrane segment spans residues D215–I235. Over L236–L250 the chain is Cytoplasmic. The chain crosses the membrane as a helical span at residues A251–L271. The Extracellular portion of the chain corresponds to E272–H284. Residues R285–V307 constitute an intramembrane region (pore-forming). A Selectivity for potassium motif is present at residues T301 to Y304. Residues Y308–T316 are Extracellular-facing. The helical transmembrane segment at F317–I337 threads the bilayer. Over E338–S1200 the chain is Cytoplasmic. In terms of domain architecture, RCK N-terminal 1 spans K356–I498. The tract at residues L505–F525 is segment S7. The tract at residues I563–I583 is segment S8. Disordered stretches follow at residues R681–G713 and R746–D785. Positions R746–G776 are enriched in polar residues. Positions V828–L848 are segment S9. The 145-residue stretch at N830–Q974 folds into the RCK N-terminal 2 domain. Residue S978 is modified to Phosphoserine. The short motif at T988–E1010 is the Calcium bowl element. A segment S10 region spans residues F1017–F1037. Positions P1170–S1200 are disordered.

It belongs to the potassium channel family. Calcium-activated (TC 1.A.1.3) subfamily. Slo sub-subfamily. In terms of assembly, homotetramer; which constitutes the calcium-activated potassium channel. Interacts with Slip1. Interacts with Slob, and, indirectly with 14-3-3-zeta via its interaction with Slob. Interacts with Pka-C1 and Src kinases, which can bind simultaneously to it. In terms of processing, phosphorylated. Phosphorylation may be mediated by both PKA and SRC kinases, which activate the channel activity. Phosphorylation by PKA is however unclear. Indeed, although modulation of channel activity requires Pka-C1, it does not interact with the whole PKA holoenzyme. Moreover, modulation of activity does not depend upon phosphorylation of Ser-978. Expressed in muscle cells, neurons of the CNS and PNS, mushroom bodies, a limited number of cells in embryonic and larval midgut and in epithelial-derived tracheal cells. During pupariation and embryogenesis, it is expressed in muscles many hours prior to the appearance of functional channels.

The protein localises to the membrane. Potassium channel activated by both membrane depolarization or increase in cytosolic Ca(2+) that mediates export of K(+). Its activation dampens the excitatory events that elevate the cytosolic Ca(2+) concentration and/or depolarize the cell membrane. It therefore contributes to repolarization of the membrane potential. Kinetics are determined by alternative splicing, phosphorylation status and its combination interaction with Slob and 14-3-3-zeta. While the interaction with Slob1 alone increases its activity, its interaction with both Slob1 and 14-3-3-zeta decreases its activity. This is Calcium-activated potassium channel slowpoke (slo) from Drosophila melanogaster (Fruit fly).